A 235-amino-acid chain; its full sequence is C-&gt;U-editing enzyme APOBEC-1 (235 aa).

Residues 10–131 form the CMP/dCMP-type deaminase domain; sequence GDATLRRRIK…MDQQHRQGLK (122 aa). His60 serves as a coordination point for Zn(2+). Glu62 functions as the Proton donor in the catalytic mechanism. Zn(2+) is bound by residues Cys92 and Cys95.

This sequence belongs to the cytidine and deoxycytidylate deaminase family. In terms of assembly, homodimer. Interacts with A1CF; form an mRNA editing complex. Interacts with RBM47; form an mRNA editing complex. Found in a complex with CELF2/CUGBP2 and A1CF. Interacts with HNRPAB. Interacts with SYNCRIP. Requires Zn(2+) as cofactor.

The protein localises to the cytoplasm. Its subcellular location is the nucleus. The catalysed reaction is a cytidine in mRNA + H2O + H(+) = a uridine in mRNA + NH4(+). It catalyses the reaction cytidine(6666) in apoB mRNA + H2O + H(+) = uridine(6666) in apoB mRNA + NH4(+). Functionally, cytidine deaminase catalyzing the cytidine to uridine postranscriptional editing of a variety of mRNAs. Form complexes with cofactors that confer differential editing activity and selectivity. Responsible for the postranscriptional editing of a CAA codon for Gln to a UAA codon for stop in the apolipoprotein B mRNA. Also involved in CGA (Arg) to UGA (Stop) editing in the NF1 mRNA. May also play a role in the epigenetic regulation of gene expression by participating in DNA demethylation. This is C-&gt;U-editing enzyme APOBEC-1 from Monodelphis domestica (Gray short-tailed opossum).